The sequence spans 319 residues: Probable carboxylesterase 5 (319 aa).

An N-acetylmethionine modification is found at methionine 1. Positions histidine 79–glycine 81 match the Involved in the stabilization of the negatively charged intermediate by the formation of the oxyanion hole motif. Active-site residues include serine 163, aspartate 262, and histidine 294.

Belongs to the 'GDXG' lipolytic enzyme family. Expressed in roots, leaves, stems, flowers and siliques.

The enzyme catalyses a carboxylic ester + H2O = an alcohol + a carboxylate + H(+). Its function is as follows. Carboxylesterase acting on esters with varying acyl chain length. The polypeptide is Probable carboxylesterase 5 (CXE5) (Arabidopsis thaliana (Mouse-ear cress)).